Consider the following 79-residue polypeptide: Small ribosomal subunit protein bS16 (79 aa).

Belongs to the bacterial ribosomal protein bS16 family.

This chain is Small ribosomal subunit protein bS16, found in Nitratidesulfovibrio vulgaris (strain DSM 19637 / Miyazaki F) (Desulfovibrio vulgaris).